A 108-amino-acid polypeptide reads, in one-letter code: Malonate decarboxylase acyl carrier protein (108 aa).

Position 35 is an O-(phosphoribosyl dephospho-coenzyme A)serine (Ser35).

It belongs to the MdcC family. Post-translationally, covalently binds the prosthetic group of malonate decarboxylase.

The protein localises to the cytoplasm. In terms of biological role, subunit of malonate decarboxylase, it is an acyl carrier protein to which acetyl and malonyl thioester residues are bound via a 2'-(5''-phosphoribosyl)-3'-dephospho-CoA prosthetic group and turn over during the catalytic mechanism. The polypeptide is Malonate decarboxylase acyl carrier protein (Burkholderia cepacia (Pseudomonas cepacia)).